Consider the following 177-residue polypeptide: Endoribonuclease YbeY (177 aa).

Positions 142, 146, and 152 each coordinate Zn(2+).

The protein belongs to the endoribonuclease YbeY family. It depends on Zn(2+) as a cofactor.

Its subcellular location is the cytoplasm. Functionally, single strand-specific metallo-endoribonuclease involved in late-stage 70S ribosome quality control and in maturation of the 3' terminus of the 16S rRNA. The chain is Endoribonuclease YbeY from Synechococcus sp. (strain CC9311).